A 243-amino-acid polypeptide reads, in one-letter code: Leucinostatins biosynthesis cluster protein S (243 aa).

Part of the gene cluster that mediates the biosynthesis of the lipopeptide antibiotics leucinostatins that show extensive biological activities, including antimalarial, antiviral, antibacterial, antifungal, and antitumor activities, as well as phytotoxic. The function of lcsS within the leucinostatins biosynthesis has not been identified yet. The sequence is that of Leucinostatins biosynthesis cluster protein S from Purpureocillium lilacinum (Paecilomyces lilacinus).